We begin with the raw amino-acid sequence, 273 residues long: Major prion protein homolog (273 aa).

A signal peptide spans 1-24 (MARLLTTCCLLALLLAACTDVALS). Positions 25–121 (KKGKGKPSGG…QKPWKPPKTN (97 aa)) are disordered. 8 tandem repeats follow at residues 42–47 (RQPSYP), 48–53 (RQPGYP), 54–59 (HNPGYP), 60–65 (HNPGYP), 66–71 (HNPGYP), 72–77 (HNPGYP), 78–83 (HNPGYP), and 84–89 (QNPGYP). Residues 42–89 (RQPSYPRQPGYPHNPGYPHNPGYPHNPGYPHNPGYPHNPGYPQNPGYP) are 8 X 6 AA tandem repeats of [HR]-[NQ]-P-G-Y-P. Positions 51-94 (GYPHNPGYPHNPGYPHNPGYPHNPGYPHNPGYPQNPGYPHNPGY) are enriched in low complexity. Positions 66, 72, and 78 each coordinate Cu(2+). Positions 90 and 93 each coordinate Cu(2+). Residues 101–111 (YNPSSGGSYHN) are compositionally biased toward polar residues. Cysteines 192 and 237 form a disulfide. N-linked (GlcNAc...) asparagine glycans are attached at residues N194, N209, and N218. S248 carries the GPI-anchor amidated serine lipid modification. Residues 249-273 (GIQLHPADTWLAVLLLLLTTLFAMH) constitute a propeptide, removed in mature form.

The protein belongs to the prion family. In terms of assembly, monomer and homodimer. Has a tendency to aggregate into amyloid fibrils containing a cross-beta spine, formed by a steric zipper of superposed beta-strands. Soluble oligomers may represent an intermediate stage on the path to fibril formation. Copper binding may promote oligomerization. Spinal cord and brain.

Its subcellular location is the cell membrane. In terms of biological role, its primary physiological function is unclear. Has cytoprotective activity against internal or environmental stresses. May play a role in neuronal development and synaptic plasticity. May be required for neuronal myelin sheath maintenance. May play a role in iron uptake and iron homeostasis. Soluble oligomers are toxic to cultured neuroblastoma cells and induce apoptosis (in vitro). Association with GPC1 (via its heparan sulfate chains) targets PRNP to lipid rafts. Also provides Cu(2+) or Zn(2+) for the ascorbate-mediated GPC1 deaminase degradation of its heparan sulfate side chains. The polypeptide is Major prion protein homolog (PRNP) (Gallus gallus (Chicken)).